The following is a 420-amino-acid chain: UDP-N-acetylglucosamine 1-carboxyvinyltransferase (420 aa).

22-23 provides a ligand contact to phosphoenolpyruvate; that stretch reads KN. Arg-92 is a UDP-N-acetyl-alpha-D-glucosamine binding site. The Proton donor role is filled by Cys-116. Cys-116 carries the 2-(S-cysteinyl)pyruvic acid O-phosphothioketal modification. Residues 121–125, Asp-304, and Ile-326 contribute to the UDP-N-acetyl-alpha-D-glucosamine site; that span reads RPVDQ.

This sequence belongs to the EPSP synthase family. MurA subfamily.

The protein resides in the cytoplasm. The enzyme catalyses phosphoenolpyruvate + UDP-N-acetyl-alpha-D-glucosamine = UDP-N-acetyl-3-O-(1-carboxyvinyl)-alpha-D-glucosamine + phosphate. It participates in cell wall biogenesis; peptidoglycan biosynthesis. Cell wall formation. Adds enolpyruvyl to UDP-N-acetylglucosamine. This chain is UDP-N-acetylglucosamine 1-carboxyvinyltransferase, found in Paraburkholderia phytofirmans (strain DSM 17436 / LMG 22146 / PsJN) (Burkholderia phytofirmans).